The chain runs to 468 residues: Ribulose bisphosphate carboxylase large chain (468 aa).

Residue Lys-5 is modified to N6,N6,N6-trimethyllysine. Substrate-binding residues include Asn-114 and Thr-164. The active-site Proton acceptor is the Lys-166. A substrate-binding site is contributed by Lys-168. Mg(2+) is bound by residues Lys-192, Asp-194, and Glu-195. Residue Lys-192 is modified to N6-carboxylysine. The active-site Proton acceptor is His-285. Arg-286, His-318, and Ser-370 together coordinate substrate.

Belongs to the RuBisCO large chain family. Type I subfamily. In terms of assembly, heterohexadecamer of 8 large chains and 8 small chains; disulfide-linked. The disulfide link is formed within the large subunit homodimers. It depends on Mg(2+) as a cofactor. The disulfide bond which can form in the large chain dimeric partners within the hexadecamer appears to be associated with oxidative stress and protein turnover.

Its subcellular location is the plastid. The protein localises to the chloroplast. It catalyses the reaction 2 (2R)-3-phosphoglycerate + 2 H(+) = D-ribulose 1,5-bisphosphate + CO2 + H2O. The catalysed reaction is D-ribulose 1,5-bisphosphate + O2 = 2-phosphoglycolate + (2R)-3-phosphoglycerate + 2 H(+). RuBisCO catalyzes two reactions: the carboxylation of D-ribulose 1,5-bisphosphate, the primary event in carbon dioxide fixation, as well as the oxidative fragmentation of the pentose substrate in the photorespiration process. Both reactions occur simultaneously and in competition at the same active site. The sequence is that of Ribulose bisphosphate carboxylase large chain from Anthocercis viscosa (Sticky tailflower).